Consider the following 357-residue polypeptide: D-alanine--D-alanine ligase (357 aa).

One can recognise an ATP-grasp domain in the interval 145–339 (KEVMLYHGIQ…YGDLVMDIVN (195 aa)). 172–225 (PFDFPVVVKPTSGGSSVGTHIIHNQEELESGLEDVFRFDNSAIVEEFTPGREFS) contributes to the ATP binding site. The Mg(2+) site is built by Asp-294, Glu-306, and Asn-308.

Belongs to the D-alanine--D-alanine ligase family. It depends on Mg(2+) as a cofactor. The cofactor is Mn(2+).

It localises to the cytoplasm. The catalysed reaction is 2 D-alanine + ATP = D-alanyl-D-alanine + ADP + phosphate + H(+). It functions in the pathway cell wall biogenesis; peptidoglycan biosynthesis. Functionally, cell wall formation. In Lacticaseibacillus paracasei (strain ATCC 334 / BCRC 17002 / CCUG 31169 / CIP 107868 / KCTC 3260 / NRRL B-441) (Lactobacillus paracasei), this protein is D-alanine--D-alanine ligase.